A 248-amino-acid chain; its full sequence is Uridylate kinase (248 aa).

Position 11–14 (11–14 (KISG)) interacts with ATP. Gly-53 contributes to the UMP binding site. ATP contacts are provided by Gly-54 and Arg-58. UMP-binding positions include Asp-74 and 135 to 142 (AGSPYLTT). Residues Thr-162, Tyr-169, and Asp-172 each coordinate ATP.

Belongs to the UMP kinase family. As to quaternary structure, homohexamer.

It localises to the cytoplasm. The enzyme catalyses UMP + ATP = UDP + ADP. The protein operates within pyrimidine metabolism; CTP biosynthesis via de novo pathway; UDP from UMP (UMPK route): step 1/1. Inhibited by UTP. Its function is as follows. Catalyzes the reversible phosphorylation of UMP to UDP. In Chlamydia pneumoniae (Chlamydophila pneumoniae), this protein is Uridylate kinase.